The sequence spans 162 residues: Caveolin-2 (162 aa).

The Cytoplasmic segment spans residues 1-86 (MGLETEKADV…FEISKYVMYK (86 aa)). Position 19 is a phosphotyrosine; by SRC (tyrosine 19). A phosphoserine mark is found at serine 20 and serine 23. Phosphotyrosine; by SRC is present on tyrosine 27. Serine 36 bears the Phosphoserine mark. Residues 87–107 (FLTVFLAIPLAFIAGILFATL) constitute an intramembrane region (helical). Residues 108–162 (SCLHIWILMPFVKTCLMVLPSVQTIWKSVTDVFIAPLCTSVGRSFSSVSLQLSQD) lie on the Cytoplasmic side of the membrane.

Belongs to the caveolin family. In terms of assembly, monomer or homodimer. Interacts with CAV1; the interaction forms a stable heterooligomeric complex that is required for targeting to lipid rafts and for caveolae formation. Tyrosine phosphorylated forms do not form heterooligomers with the Tyr-19-phosphorylated form existing as a monomer or dimer, and the Tyr-27-form as a monomer only. Interacts (tyrosine phosphorylated form) with the SH2 domain-containing proteins, RASA1, NCK1 and SRC. Interacts (tyrosine phosphorylated form) with INSR, the interaction (Tyr-27-phosphorylated form) is increased on insulin stimulation. Interacts (Tyr-19 phosphorylated form) with MAPK1 (phosphorylated form); the interaction, promoted by insulin, leads to nuclear location and MAPK1 activation. Interacts with STAT3; the interaction is increased on insulin-induced tyrosine phosphorylation leading to STAT activation. Phosphorylated on serine and tyrosine residues. CAV1 promotes phosphorylation on Ser-23 which then targets the complex to the plasma membrane, lipid rafts and caveolae. Phosphorylation on Ser-36 appears to modulate mitosis in endothelial cells. Phosphorylation on both Tyr-19 and Tyr-27 is required for insulin-induced 'Ser-727' phosphorylation of STAT3 and its activation. Phosphorylation on Tyr-19 is required for insulin-induced phosphorylation of MAPK1 and DNA binding of STAT3. Tyrosine phosphorylation is induced by both EGF and insulin (By. similarity).

It is found in the nucleus. The protein resides in the cytoplasm. It localises to the golgi apparatus membrane. Its subcellular location is the cell membrane. The protein localises to the membrane. It is found in the caveola. May act as a scaffolding protein within caveolar membranes. Interacts directly with G-protein alpha subunits and can functionally regulate their activity. Acts as an accessory protein in conjunction with CAV1 in targeting to lipid rafts and driving caveolae formation. The Ser-36 phosphorylated form has a role in modulating mitosis in endothelial cells. Positive regulator of cellular mitogenesis of the MAPK signaling pathway. Required for the insulin-stimulated nuclear translocation and activation of MAPK1 and STAT3, and the subsequent regulation of cell cycle progression. The polypeptide is Caveolin-2 (CAV2) (Chlorocebus aethiops (Green monkey)).